The following is a 272-amino-acid chain: Putative phosphoenolpyruvate synthase regulatory protein (272 aa).

152 to 159 (GVSRSGKT) is an ADP binding site.

This sequence belongs to the pyruvate, phosphate/water dikinase regulatory protein family. PSRP subfamily.

It catalyses the reaction [pyruvate, water dikinase] + ADP = [pyruvate, water dikinase]-phosphate + AMP + H(+). It carries out the reaction [pyruvate, water dikinase]-phosphate + phosphate + H(+) = [pyruvate, water dikinase] + diphosphate. In terms of biological role, bifunctional serine/threonine kinase and phosphorylase involved in the regulation of the phosphoenolpyruvate synthase (PEPS) by catalyzing its phosphorylation/dephosphorylation. The sequence is that of Putative phosphoenolpyruvate synthase regulatory protein from Alcanivorax borkumensis (strain ATCC 700651 / DSM 11573 / NCIMB 13689 / SK2).